A 40-amino-acid polypeptide reads, in one-letter code: Photosystem II reaction center protein X (40 aa).

A helical membrane pass occupies residues 10 to 30 (WSLVWGTVIVVIPVTVGLVFI).

The protein belongs to the PsbX family. Type 1 subfamily. In terms of assembly, PSII is composed of 1 copy each of membrane proteins PsbA, PsbB, PsbC, PsbD, PsbE, PsbF, PsbH, PsbI, PsbJ, PsbK, PsbL, PsbM, PsbT, PsbX, PsbY, PsbZ, Psb30/Ycf12, peripheral proteins PsbO, CyanoQ (PsbQ), PsbU, PsbV and a large number of cofactors. It forms dimeric complexes.

The protein resides in the cellular thylakoid membrane. Involved in the binding and/or turnover of quinones at the Q(B) site of photosystem II (PSII). PSII is a light-driven water plastoquinone oxidoreductase, using light energy to abstract electrons from H(2)O, generating a proton gradient subsequently used for ATP formation. This is Photosystem II reaction center protein X from Crocosphaera subtropica (strain ATCC 51142 / BH68) (Cyanothece sp. (strain ATCC 51142)).